A 501-amino-acid chain; its full sequence is HMG-box protein STE11 (501 aa).

A compositionally biased stretch (polar residues) spans 142 to 153; it reads PVNMVGSLSGSP. 2 disordered regions span residues 142–205 and 246–293; these read PVNM…KRPL and YAEM…SLEQ. Residues 192-204 show a composition bias toward low complexity; the sequence is SRSGSSSSGIKRP. Residues 201 to 265 constitute a DNA-binding region (HMG box); that stretch reads IKRPLNSFML…RHAKEYPDYK (65 aa). Residues 246 to 263 are compositionally biased toward basic and acidic residues; that stretch reads YAEMAQRERERHAKEYPD.

Phosphorylated by MAPK2.

The protein localises to the nucleus. The sequence is that of HMG-box protein STE11 from Pneumocystis carinii.